Here is an 853-residue protein sequence, read N- to C-terminus: Probable inorganic carbon transporter subunit DabA (853 aa).

The tract at residues 1-21 is disordered; that stretch reads MSHANSEETMMNTAVAHPSTS. Residues 7-21 show a composition bias toward polar residues; that stretch reads EETMMNTAVAHPSTS. Cys-364, Asp-366, His-546, and Cys-561 together coordinate Zn(2+).

This sequence belongs to the inorganic carbon transporter (TC 9.A.2) DabA family. As to quaternary structure, forms a complex with DabB. Zn(2+) serves as cofactor.

The protein localises to the cell inner membrane. Its function is as follows. Part of an energy-coupled inorganic carbon pump. This is Probable inorganic carbon transporter subunit DabA from Methylovorus glucosotrophus (strain SIP3-4).